A 351-amino-acid chain; its full sequence is Ion-translocating oxidoreductase complex subunit D (351 aa).

The next 4 helical transmembrane spans lie at 18–38, 40–60, 87–107, and 121–141; these read IMLL…YFFG, GSLI…GAVL, LPPL…IVIA, and PAMV…TSWL. The residue at position 185 (threonine 185) is an FMN phosphoryl threonine. 5 consecutive transmembrane segments (helical) span residues 211–231, 241–261, 264–284, 298–318, and 321–341; these read VLAG…GLLL, IPVS…MIAP, FASP…FFIA, LIFG…GGYP, and VAFA…YTQP.

Belongs to the NqrB/RnfD family. In terms of assembly, the complex is composed of six subunits: RnfA, RnfB, RnfC, RnfD, RnfE and RnfG. It depends on FMN as a cofactor.

Its subcellular location is the cell inner membrane. Its function is as follows. Part of a membrane-bound complex that couples electron transfer with translocation of ions across the membrane. The protein is Ion-translocating oxidoreductase complex subunit D of Yersinia pestis.